Reading from the N-terminus, the 180-residue chain is Peroxisome assembly protein 22 (180 aa).

The helical transmembrane segment at 15–32 threads the bilayer; it reads LGIVGTAIAVLVTSYYIY.

The protein belongs to the peroxin-22 family.

The protein localises to the peroxisome membrane. Its function is as follows. Involved in peroxisome biogenesis. The chain is Peroxisome assembly protein 22 (PEX22) from Saccharomyces cerevisiae (strain ATCC 204508 / S288c) (Baker's yeast).